The primary structure comprises 252 residues: MNVKVYNLDGSEKGDIELPAVFETEYRPDLIKRAVISSLTAKLQPKGCDAFAGYRTSAKSIGKGHGKARVRRTAQGAGAFVPQAVGGRRAHPPKVEKILFERINRKERLKALASAIAASANPEIVSARGHKIEGVPSLPLVVNAEFESLAKTKEVLGVFTALKLDADLERAKDGVKIKAGRAKLRGRKYKKPKSVLVVVGDACDAVAASRNLAGVDVITANDLSAIHIAPGTMAGRLTLWTESAIEKLNGRF.

It belongs to the universal ribosomal protein uL4 family. In terms of assembly, part of the 50S ribosomal subunit.

Functionally, one of the primary rRNA binding proteins, this protein initially binds near the 5'-end of the 23S rRNA. It is important during the early stages of 50S assembly. It makes multiple contacts with different domains of the 23S rRNA in the assembled 50S subunit and ribosome. In terms of biological role, forms part of the polypeptide exit tunnel. This is Large ribosomal subunit protein uL4 from Methanococcus maripaludis (strain C6 / ATCC BAA-1332).